Consider the following 82-residue polypeptide: Cytochrome b559 subunit alpha (82 aa).

The helical transmembrane segment at 22 to 36 (VIHSITIPALFIAGW) threads the bilayer. H24 is a heme binding site.

Belongs to the PsbE/PsbF family. As to quaternary structure, heterodimer of an alpha subunit and a beta subunit. PSII is composed of 1 copy each of membrane proteins PsbA, PsbB, PsbC, PsbD, PsbE, PsbF, PsbH, PsbI, PsbJ, PsbK, PsbL, PsbM, PsbT, PsbX, PsbY, PsbZ, Psb30/Ycf12, peripheral proteins PsbO, CyanoQ (PsbQ), PsbU, PsbV and a large number of cofactors. It forms dimeric complexes. Heme b is required as a cofactor.

The protein localises to the cellular thylakoid membrane. In terms of biological role, this b-type cytochrome is tightly associated with the reaction center of photosystem II (PSII). PSII is a light-driven water:plastoquinone oxidoreductase that uses light energy to abstract electrons from H(2)O, generating O(2) and a proton gradient subsequently used for ATP formation. It consists of a core antenna complex that captures photons, and an electron transfer chain that converts photonic excitation into a charge separation. The sequence is that of Cytochrome b559 subunit alpha from Trichodesmium erythraeum (strain IMS101).